A 491-amino-acid chain; its full sequence is Probable cytosol aminopeptidase (491 aa).

Mn(2+)-binding residues include Lys-261 and Asp-266. Lys-273 is an active-site residue. Residues Asp-284, Asp-343, and Glu-345 each contribute to the Mn(2+) site. The active site involves Arg-347.

Belongs to the peptidase M17 family. Mn(2+) serves as cofactor.

Its subcellular location is the cytoplasm. It catalyses the reaction Release of an N-terminal amino acid, Xaa-|-Yaa-, in which Xaa is preferably Leu, but may be other amino acids including Pro although not Arg or Lys, and Yaa may be Pro. Amino acid amides and methyl esters are also readily hydrolyzed, but rates on arylamides are exceedingly low.. It carries out the reaction Release of an N-terminal amino acid, preferentially leucine, but not glutamic or aspartic acids.. Presumably involved in the processing and regular turnover of intracellular proteins. Catalyzes the removal of unsubstituted N-terminal amino acids from various peptides. In Stenotrophomonas maltophilia (strain K279a), this protein is Probable cytosol aminopeptidase.